A 109-amino-acid polypeptide reads, in one-letter code: Small ribosomal subunit protein uS17 (109 aa).

It belongs to the universal ribosomal protein uS17 family. Part of the 30S ribosomal subunit.

In terms of biological role, one of the primary rRNA binding proteins, it binds specifically to the 5'-end of 16S ribosomal RNA. The chain is Small ribosomal subunit protein uS17 from Methanosarcina mazei (strain ATCC BAA-159 / DSM 3647 / Goe1 / Go1 / JCM 11833 / OCM 88) (Methanosarcina frisia).